The following is a 1697-amino-acid chain: UDP-sugar-dependent glycosyltransferase 52 (1697 aa).

Disordered regions lie at residues 20–40 (HSDS…NYEN) and 142–166 (STDL…LMIP). Positions 234 to 332 (DYVLENYLYK…WYHEINRMQK (99 aa)) constitute a PH domain. 2 disordered regions span residues 573–645 (FRSK…TTHE) and 707–756 (PLDK…KQSQ). 2 stretches are compositionally biased toward low complexity: residues 584 to 628 (QNSQ…SSSA) and 711 to 722 (QQQQQQQQQQQQ). 2 consecutive GRAM domains span residues 658 to 793 (STFH…TKER) and 881 to 948 (IKIK…KKYS). Positions 739–749 (TDSDTDSESDF) are enriched in acidic residues. 4 disordered regions span residues 1011–1047 (SPSI…IHST), 1062–1085 (DGEN…SNSF), 1110–1130 (SAQQ…STTT), and 1466–1488 (EHNN…SNKS). Composition is skewed to low complexity over residues 1026 to 1047 (PPSS…IHST), 1065 to 1084 (NNSN…KSNS), 1112 to 1130 (QQQQ…STTT), and 1469 to 1479 (NNNNNNNNNNN). The FYVE-type zinc-finger motif lies at 1622–1685 (SSAPNSCMGC…VCDKCFNDLQ (64 aa)). The Zn(2+) site is built by Cys-1628, Cys-1631, Cys-1647, Cys-1650, Cys-1655, Cys-1658, Cys-1677, and Cys-1680.

The protein belongs to the glycosyltransferase 28 family.

It catalyses the reaction a sterol + UDP-alpha-D-glucose = a sterol 3-beta-D-glucoside + UDP + H(+). Its function is as follows. Involved in the biosynthesis of sterol glucoside. Can use different sterols such as cholesterol, sitosterol, and ergosterol as sugar acceptors. The polypeptide is UDP-sugar-dependent glycosyltransferase 52 (ugt52) (Dictyostelium discoideum (Social amoeba)).